Here is a 459-residue protein sequence, read N- to C-terminus: N,N-dimethyl phenylurea N-demethylase subunit alpha (459 aa).

Positions 55–166 constitute a Rieske domain; sequence WVFVAHETEI…VESYHGFIFT (112 aa). Residues cysteine 97, histidine 99, cysteine 117, and histidine 120 each contribute to the [2Fe-2S] cluster site. Residues histidine 225, histidine 230, and aspartate 386 each contribute to the Fe cation site.

This sequence belongs to the bacterial ring-hydroxylating dioxygenase alpha subunit family. As to quaternary structure, pdmA (subunit alpha) and PdmB (subunit beta) form the oxygenase component of a bacterial Rieske non-heme iron oxygenase (RO) system. [2Fe-2S] cluster serves as cofactor. It depends on Fe cation as a cofactor.

It catalyses the reaction a 1,1-dimethyl-3-phenylurea + 2 reduced [2Fe-2S]-[ferredoxin] + O2 + 2 H(+) = a 1-methyl-3-phenylurea + formaldehyde + 2 oxidized [2Fe-2S]-[ferredoxin] + H2O. The enzyme catalyses isoproturon + 2 reduced [2Fe-2S]-[ferredoxin] + O2 + 2 H(+) = 1-methyl-3-[4-(propan-2-yl)phenyl]urea + formaldehyde + 2 oxidized [2Fe-2S]-[ferredoxin] + H2O. It carries out the reaction chlorotoluron + 2 reduced [2Fe-2S]-[ferredoxin] + O2 + 2 H(+) = 3-(3-chloro-4-methylphenyl)-1-methylurea + formaldehyde + 2 oxidized [2Fe-2S]-[ferredoxin] + H2O. The catalysed reaction is metoxuron + 2 reduced [2Fe-2S]-[ferredoxin] + O2 + 2 H(+) = 3-(3-chloro-4-methoxylphenyl)-1-methylurea + formaldehyde + 2 oxidized [2Fe-2S]-[ferredoxin] + H2O. It catalyses the reaction monuron + 2 reduced [2Fe-2S]-[ferredoxin] + O2 + 2 H(+) = 3-(4-chlorophenyl)-1-methylurea + formaldehyde + 2 oxidized [2Fe-2S]-[ferredoxin] + H2O. The enzyme catalyses diuron + 2 reduced [2Fe-2S]-[ferredoxin] + O2 + 2 H(+) = 3-(3,4-dichlorophenyl)-1-methylurea + formaldehyde + 2 oxidized [2Fe-2S]-[ferredoxin] + H2O. It carries out the reaction fluometuron + 2 reduced [2Fe-2S]-[ferredoxin] + O2 + 2 H(+) = 3-[3-(trifluoromethyl)phenyl]-1-methylurea + formaldehyde + 2 oxidized [2Fe-2S]-[ferredoxin] + H2O. The catalysed reaction is fenuron + 2 reduced [2Fe-2S]-[ferredoxin] + O2 + 2 H(+) = 1-methyl-3-phenylurea + formaldehyde + 2 oxidized [2Fe-2S]-[ferredoxin] + H2O. Its pathway is xenobiotic degradation. With respect to regulation, activity is stimulated in vitro by coexpression of a [3Fe-4S]-type ferredoxin. Part of the multicomponent N,N-dimethyl phenylurea N-demethylase responsible for the initial N-demethylation step during the bacterial metabolism of N,N-dimethyl-substituted phenylurea herbicides. Catalyzes the mono-N-demethylation of N,N-dimethyl-substituted phenylurea herbicides to their mono-N-demethylated derivatives. Is active on isoproturon (IPU), chlorotoluron, metoxuron, monoron, diuron, fluometuron and fenuron, but cannot transform the N-methoxy-N-methyl-substituted herbicides. The protein is N,N-dimethyl phenylurea N-demethylase subunit alpha of Sphingobium sp. (strain YBL2).